The following is a 226-amino-acid chain: Phosphoglycolate phosphatase (226 aa).

Catalysis depends on Asp-9, which acts as the Nucleophile. The Mg(2+) site is built by Asp-9 and Asp-11. A substrate-binding site is contributed by Lys-150. Residues Asp-173 and Asp-177 each coordinate Mg(2+).

The protein belongs to the archaeal SPP-like hydrolase family. Requires Mg(2+) as cofactor.

It catalyses the reaction 2-phosphoglycolate + H2O = glycolate + phosphate. Its function is as follows. Catalyzes the dephosphorylation of 2-phosphoglycolate. This chain is Phosphoglycolate phosphatase, found in Methanosarcina mazei (strain ATCC BAA-159 / DSM 3647 / Goe1 / Go1 / JCM 11833 / OCM 88) (Methanosarcina frisia).